The following is a 109-amino-acid chain: MSHSTDHSGASHGSVKTYMTGFILSIILTVIPFWMVMTGAASPAVILGTILAMAVVQVLVHLVCFLHMNTKSDEGWNMTAFVFTVLIIAILVVGSIWIMWNLNYNMMMH.

Residues Met1–Thr17 are Cytoplasmic-facing. A helical transmembrane segment spans residues Tyr18 to Val36. Over Met37 to Val45 the chain is Periplasmic. A helical membrane pass occupies residues Ile46–Cys64. Residues Phe65–Ala80 lie on the Cytoplasmic side of the membrane. Residues Phe81–Met99 form a helical membrane-spanning segment. Residues Trp100 to His109 lie on the Periplasmic side of the membrane.

The protein belongs to the cytochrome c oxidase bacterial subunit 4 family. As to quaternary structure, heterooctamer of two A chains, two B chains, two C chains and two D chains.

The protein resides in the cell inner membrane. Functionally, cytochrome bo(3) ubiquinol terminal oxidase is the component of the aerobic respiratory chain of E.coli that predominates when cells are grown at high aeration. Has proton pump activity across the membrane in addition to electron transfer, pumping 2 protons/electron. This chain is Cytochrome bo(3) ubiquinol oxidase subunit 4 (cyoD), found in Escherichia coli O157:H7.